A 738-amino-acid polypeptide reads, in one-letter code: MRLLLLLVGLSTLLNHSYTQNCKTPCLPNAKCEVLDEVAACFCSTGYTGNGITICEDVDECNETSVCGDHAVCENTNGGFSCFCVEGYQTSTGKTQFTPNDGSYCQDVDECNETSVCGDHAVCENTNGGFSCFCVEGYQTSTGKTQFTPNDGSYCQEIVNSNCHLEHDCIAANINKTLKRIGPITEQLTLLHEIYKNSEAELSLVDIVTYIEILTESSSLQGYIKNTTSPKDAYFGSALTEFGKTVNNFVEKNTHEMWDQLPTNRRRLHLTKLMHAAEHVTLQISQNIQKNTQFDMNSTDLALKVFVFDSVHMKHTHPHMNVDGGYVKISPRRKSAYDPNGNVIVAFLCYRSIGPLLSSSDDFLLGAQSDNSKGKEKVISSVISASISSNPPTLYELEKITFTLSHVKLSDKHQTQCAFWNYSVDDMNNGSWSSEGCELTYSNDTHTSCRCSHLTHFAILMSPSTSIEVKDYNILTRITQLGIIISLICLAICIFTFWFFSEIQSTRTTIHKNLCCSLFLAQLVFLVGININTNKLVCSIIAGLLHYFFLAAFAWMCIEGIYLYLIVVGLIYNKGFLHKNFYIFGYLSPAVVVGFSASLGYRYYGTTKVCWLSTENNFIWSFIGPACLIILVNLLAFGVIIYKVFRHTAGLKPEVSCYENIRSCARGALALLFLLGTTWTFGVLHVVHASVVTAYLFTVSNAFQGMFIFLFLCVLSRKIQEEYYRLFKNVPCCFECLR.

A signal peptide spans methionine 1–threonine 19. Positions glutamine 20–glutamate 56 constitute an EGF-like 1 domain. The Extracellular segment spans residues glutamine 20–glutamine 480. Cystine bridges form between cysteine 22–cysteine 32, cysteine 26–cysteine 41, cysteine 43–cysteine 55, cysteine 61–cysteine 73, cysteine 67–cysteine 82, cysteine 84–cysteine 105, cysteine 111–cysteine 123, cysteine 117–cysteine 132, and cysteine 134–cysteine 155. Residues aspartate 57 to glutamine 106 enclose the EGF-like 2; calcium-binding domain. Asparagine 62 carries an N-linked (GlcNAc...) asparagine glycan. One can recognise an EGF-like 3; calcium-binding domain in the interval aspartate 107 to glutamine 156. An N-linked (GlcNAc...) asparagine glycan is attached at asparagine 112. Asparagine 175, asparagine 226, asparagine 297, asparagine 421, asparagine 429, and asparagine 443 each carry an N-linked (GlcNAc...) asparagine glycan. In terms of domain architecture, GAIN-B spans threonine 292–isoleucine 467. Disulfide bonds link cysteine 417–cysteine 449 and cysteine 437–cysteine 451. Residues cysteine 417–isoleucine 467 form a GPS region. The helical transmembrane segment at leucine 481–serine 501 threads the bilayer. The Cytoplasmic segment spans residues glutamate 502–glutamine 522. Residues leucine 523–glycine 543 traverse the membrane as a helical segment. Residues leucine 544–tyrosine 547 are Extracellular-facing. A helical transmembrane segment spans residues phenylalanine 548–valine 568. Residues glycine 569–asparagine 580 lie on the Cytoplasmic side of the membrane. A helical transmembrane segment spans residues phenylalanine 581–tyrosine 601. Over arginine 602–serine 621 the chain is Extracellular. A helical membrane pass occupies residues phenylalanine 622–tyrosine 642. Topologically, residues lysine 643–arginine 666 are cytoplasmic. Residues glycine 667–valine 687 traverse the membrane as a helical segment. Over histidine 688–alanine 694 the chain is Extracellular. Residues tyrosine 695–leucine 715 form a helical membrane-spanning segment. The Cytoplasmic segment spans residues serine 716–arginine 738.

This sequence belongs to the G-protein coupled receptor 2 family. Adhesion G-protein coupled receptor (ADGR) subfamily. In terms of assembly, heterodimer of 2 chains generated by proteolytic processing; the large extracellular N-terminal fragment and the membrane-bound C-terminal fragment predominantly remain associated and non-covalently linked. In terms of processing, proteolytically cleaved into 2 subunits, an extracellular alpha subunit and a seven-transmembrane subunit. Post-translationally, glycosylated. Abundantly expressed in heart, lung, and kidney. Less evident expression is observed in brain, skeletal muscle, liver and spleen. No expression is detected in testis.

The protein localises to the cell membrane. In terms of biological role, endothelial orphan receptor that acts as a key regulator of angiogenesis. This chain is Adhesion G protein-coupled receptor L4 (Adgrl4), found in Rattus norvegicus (Rat).